We begin with the raw amino-acid sequence, 137 residues long: Histone H2B.3 (137 aa).

The segment covering 1-37 has biased composition (basic and acidic residues); it reads KPAEKKPAEKTPVAEKAPAEKKPKAGKKLPKDAAAGD. Residues 1-45 are disordered; it reads KPAEKKPAEKTPVAEKAPAEKKPKAGKKLPKDAAAGDKKKKRSKK. N6-acetyllysine occurs at positions 27 and 28. A Glycyl lysine isopeptide (Lys-Gly) (interchain with G-Cter in ubiquitin) cross-link involves residue lysine 133.

The protein belongs to the histone H2B family. The nucleosome is a histone octamer containing two molecules each of H2A, H2B, H3 and H4 assembled in one H3-H4 heterotetramer and two H2A-H2B heterodimers. The octamer wraps approximately 147 bp of DNA. Can be acetylated to formH2BK33ac and H2BK34ac. Post-translationally, monoubiquitinated to form H2BK143ub1; may give a specific tag for epigenetic transcriptional activation. Ubiquitous. Highest level in shoots, fruits and young flower buds, including petals, anthers and ovules.

Its subcellular location is the nucleus. It localises to the chromosome. Its function is as follows. Core component of nucleosome. Nucleosomes wrap and compact DNA into chromatin, limiting DNA accessibility to the cellular machineries which require DNA as a template. Histones thereby play a central role in transcription regulation, DNA repair, DNA replication and chromosomal stability. DNA accessibility is regulated via a complex set of post-translational modifications of histones, also called histone code, and nucleosome remodeling. In Solanum lycopersicum (Tomato), this protein is Histone H2B.3 (H2B-3).